The primary structure comprises 87 residues: DNA-directed RNA polymerase subunit omega (87 aa).

The protein belongs to the RNA polymerase subunit omega family. The RNAP catalytic core consists of 2 alpha, 1 beta, 1 beta' and 1 omega subunit. When a sigma factor is associated with the core the holoenzyme is formed, which can initiate transcription.

It catalyses the reaction RNA(n) + a ribonucleoside 5'-triphosphate = RNA(n+1) + diphosphate. Promotes RNA polymerase assembly. Latches the N- and C-terminal regions of the beta' subunit thereby facilitating its interaction with the beta and alpha subunits. The protein is DNA-directed RNA polymerase subunit omega of Pseudomonas putida (strain ATCC 700007 / DSM 6899 / JCM 31910 / BCRC 17059 / LMG 24140 / F1).